A 357-amino-acid polypeptide reads, in one-letter code: Protein RecA (357 aa).

ATP is bound at residue 67-74; it reads GPESSGKT.

Belongs to the RecA family.

The protein resides in the cytoplasm. Can catalyze the hydrolysis of ATP in the presence of single-stranded DNA, the ATP-dependent uptake of single-stranded DNA by duplex DNA, and the ATP-dependent hybridization of homologous single-stranded DNAs. It interacts with LexA causing its activation and leading to its autocatalytic cleavage. The sequence is that of Protein RecA from Shewanella oneidensis (strain ATCC 700550 / JCM 31522 / CIP 106686 / LMG 19005 / NCIMB 14063 / MR-1).